The chain runs to 151 residues: Methylglyoxal synthase (151 aa).

Positions 6 to 151 (RVMPAHKHIA…DYDAYLAERV (146 aa)) constitute an MGS-like domain. Substrate-binding positions include H19, K23, 45 to 48 (TGTT), and 65 to 66 (SG). Residue D71 is the Proton donor/acceptor of the active site. H98 lines the substrate pocket.

It belongs to the methylglyoxal synthase family.

The enzyme catalyses dihydroxyacetone phosphate = methylglyoxal + phosphate. Functionally, catalyzes the formation of methylglyoxal from dihydroxyacetone phosphate. The sequence is that of Methylglyoxal synthase from Aliivibrio fischeri (strain ATCC 700601 / ES114) (Vibrio fischeri).